A 148-amino-acid polypeptide reads, in one-letter code: Small ribosomal subunit protein uS7m (148 aa).

The protein belongs to the universal ribosomal protein uS7 family. Part of the small ribosomal subunit.

It localises to the mitochondrion. Functionally, one of the primary rRNA binding proteins, it binds directly to 18S rRNA where it nucleates assembly of the head domain of the small subunit. The sequence is that of Small ribosomal subunit protein uS7m (RPS7) from Triticum aestivum (Wheat).